The sequence spans 146 residues: Transmembrane protein 207 (146 aa).

The first 29 residues, 1–29 (MSRSRLFSVTSAISTIGILCLPLFQLVLS), serve as a signal peptide directing secretion. A helical membrane pass occupies residues 52–72 (IWILLLLVLVAALLCGAVVLC).

Interacts with WWOX. Expressed in some signet-ring cell carcinoma, especially those showing high invasion and metastatic activity (at protein level).

It is found in the membrane. The polypeptide is Transmembrane protein 207 (TMEM207) (Homo sapiens (Human)).